A 165-amino-acid chain; its full sequence is uncharacterized protein (165 aa).

A helical transmembrane segment spans residues 16-36 (ASISSILNFFFFYIMEYFVAV).

It belongs to the asfivirus F165R family.

Its subcellular location is the host membrane. This is an uncharacterized protein from African swine fever virus (strain Badajoz 1971 Vero-adapted) (Ba71V).